Consider the following 131-residue polypeptide: Small ribosomal subunit protein uS8 (131 aa).

The protein belongs to the universal ribosomal protein uS8 family. Part of the 30S ribosomal subunit. Contacts proteins S5 and S12.

Its function is as follows. One of the primary rRNA binding proteins, it binds directly to 16S rRNA central domain where it helps coordinate assembly of the platform of the 30S subunit. This Clostridium novyi (strain NT) protein is Small ribosomal subunit protein uS8.